The primary structure comprises 388 residues: Flap endonuclease 1 (388 aa).

The interval 1-104 is N-domain; sequence MGILGLSKLI…GELAKRAERR (104 aa). Mg(2+) is bound at residue Asp34. Residues Arg47 and Arg70 each coordinate DNA. 5 residues coordinate Mg(2+): Asp86, Glu158, Glu160, Asp179, and Asp181. The I-domain stretch occupies residues 122–253; the sequence is EIEKFNRRLV…KRAIELINSY (132 aa). Position 158 (Glu158) interacts with DNA. The DNA site is built by Gly231 and Asp233. Asp233 is a Mg(2+) binding site. Residues 336–344 form an interaction with PCNA region; sequence TQVRLDSFF. A disordered region spans residues 355-388; sequence AAAKRKAEEAKKSANNKKAKIGGGGGAGRGRRPK.

The protein belongs to the XPG/RAD2 endonuclease family. FEN1 subfamily. As to quaternary structure, interacts with PCNA. Three molecules of FEN1 bind to one PCNA trimer with each molecule binding to one PCNA monomer. PCNA stimulates the nuclease activity without altering cleavage specificity. Requires Mg(2+) as cofactor. In terms of processing, phosphorylated. Phosphorylation upon DNA damage induces relocalization to the nuclear plasma.

It localises to the nucleus. The protein localises to the nucleolus. It is found in the nucleoplasm. Its subcellular location is the mitochondrion. Structure-specific nuclease with 5'-flap endonuclease and 5'-3' exonuclease activities involved in DNA replication and repair. During DNA replication, cleaves the 5'-overhanging flap structure that is generated by displacement synthesis when DNA polymerase encounters the 5'-end of a downstream Okazaki fragment. It enters the flap from the 5'-end and then tracks to cleave the flap base, leaving a nick for ligation. Also involved in the long patch base excision repair (LP-BER) pathway, by cleaving within the apurinic/apyrimidinic (AP) site-terminated flap. Acts as a genome stabilization factor that prevents flaps from equilibrating into structures that lead to duplications and deletions. Also possesses 5'-3' exonuclease activity on nicked or gapped double-stranded DNA, and exhibits RNase H activity. Also involved in replication and repair of rDNA and in repairing mitochondrial DNA. In Drosophila willistoni (Fruit fly), this protein is Flap endonuclease 1.